The primary structure comprises 24 residues: FFPIIAGMAAKLIPSLFCKITKKC.

A disulfide bond links cysteine 18 and cysteine 24.

Expressed by the skin glands.

Its subcellular location is the secreted. Functionally, antimicrobial peptide with activity against Gram-negative and Gram-positive bacteria (MIC=13 uM against E.coli, MIC=3 uM against S.aureus) and fungi (MIC=6 uM against C.albicans). Shows hemolytic activity on human erythrocytes (HC(50)=7 uM). This is Brevinin-1SPa from Lithobates septentrionalis (Mink frog).